We begin with the raw amino-acid sequence, 245 residues long: 4-hydroxy-tetrahydrodipicolinate reductase (245 aa).

NAD(+) is bound by residues 7–12, 75–77, and 102–105; these read GARGKV, GTT, and APNF. The active-site Proton donor/acceptor is H132. Residue H133 coordinates (S)-2,3,4,5-tetrahydrodipicolinate. K136 acts as the Proton donor in catalysis. 142-143 serves as a coordination point for (S)-2,3,4,5-tetrahydrodipicolinate; the sequence is GT.

It belongs to the DapB family.

Its subcellular location is the cytoplasm. It catalyses the reaction (S)-2,3,4,5-tetrahydrodipicolinate + NAD(+) + H2O = (2S,4S)-4-hydroxy-2,3,4,5-tetrahydrodipicolinate + NADH + H(+). It carries out the reaction (S)-2,3,4,5-tetrahydrodipicolinate + NADP(+) + H2O = (2S,4S)-4-hydroxy-2,3,4,5-tetrahydrodipicolinate + NADPH + H(+). It functions in the pathway amino-acid biosynthesis; L-lysine biosynthesis via DAP pathway; (S)-tetrahydrodipicolinate from L-aspartate: step 4/4. Functionally, catalyzes the conversion of 4-hydroxy-tetrahydrodipicolinate (HTPA) to tetrahydrodipicolinate. This Mycolicibacterium vanbaalenii (strain DSM 7251 / JCM 13017 / BCRC 16820 / KCTC 9966 / NRRL B-24157 / PYR-1) (Mycobacterium vanbaalenii) protein is 4-hydroxy-tetrahydrodipicolinate reductase.